The primary structure comprises 66 residues: Photosystem II reaction center protein J (66 aa).

Residues M1–A23 are disordered. Residues L37–Y57 form a helical membrane-spanning segment.

The protein belongs to the PsbJ family. PSII is composed of 1 copy each of membrane proteins PsbA, PsbB, PsbC, PsbD, PsbE, PsbF, PsbH, PsbI, PsbJ, PsbK, PsbL, PsbM, PsbT, PsbX, PsbY, PsbZ, Psb30/Ycf12, peripheral proteins PsbO, CyanoQ (PsbQ), PsbU, PsbV and a large number of cofactors. It forms dimeric complexes.

The protein resides in the cellular thylakoid membrane. In terms of biological role, one of the components of the core complex of photosystem II (PSII). PSII is a light-driven water:plastoquinone oxidoreductase that uses light energy to abstract electrons from H(2)O, generating O(2) and a proton gradient subsequently used for ATP formation. It consists of a core antenna complex that captures photons, and an electron transfer chain that converts photonic excitation into a charge separation. In Parasynechococcus marenigrum (strain WH8102), this protein is Photosystem II reaction center protein J.